Reading from the N-terminus, the 472-residue chain is 3-isopropylmalate dehydratase large subunit (472 aa).

[4Fe-4S] cluster contacts are provided by Cys-349, Cys-409, and Cys-412.

It belongs to the aconitase/IPM isomerase family. LeuC type 1 subfamily. Heterodimer of LeuC and LeuD. [4Fe-4S] cluster is required as a cofactor.

It carries out the reaction (2R,3S)-3-isopropylmalate = (2S)-2-isopropylmalate. It participates in amino-acid biosynthesis; L-leucine biosynthesis; L-leucine from 3-methyl-2-oxobutanoate: step 2/4. Catalyzes the isomerization between 2-isopropylmalate and 3-isopropylmalate, via the formation of 2-isopropylmaleate. The chain is 3-isopropylmalate dehydratase large subunit from Rhodospirillum rubrum (strain ATCC 11170 / ATH 1.1.1 / DSM 467 / LMG 4362 / NCIMB 8255 / S1).